The sequence spans 342 residues: S-adenosylmethionine:tRNA ribosyltransferase-isomerase (342 aa).

It belongs to the QueA family. As to quaternary structure, monomer.

The protein localises to the cytoplasm. The catalysed reaction is 7-aminomethyl-7-carbaguanosine(34) in tRNA + S-adenosyl-L-methionine = epoxyqueuosine(34) in tRNA + adenine + L-methionine + 2 H(+). The protein operates within tRNA modification; tRNA-queuosine biosynthesis. Its function is as follows. Transfers and isomerizes the ribose moiety from AdoMet to the 7-aminomethyl group of 7-deazaguanine (preQ1-tRNA) to give epoxyqueuosine (oQ-tRNA). This is S-adenosylmethionine:tRNA ribosyltransferase-isomerase from Streptococcus pneumoniae (strain Hungary19A-6).